A 103-amino-acid chain; its full sequence is MRGQQAPQQPTRVRTPRENENEVLGVIEQMLGASRVRVRCMDGKLRMGRIPGKLKRKIWVREDDVVIVTPWEVQSDEKCDVIWRYTKGQVDWLNRKGYLEFMR.

An S1-like domain is found at 11–86 (TRVRTPRENE…EKCDVIWRYT (76 aa)).

This sequence belongs to the eIF-1A family.

In terms of biological role, seems to be required for maximal rate of protein biosynthesis. Enhances ribosome dissociation into subunits and stabilizes the binding of the initiator Met-tRNA(I) to 40 S ribosomal subunits. The protein is Translation initiation factor 1A (eIF1A) of Methanococcus maripaludis (strain C5 / ATCC BAA-1333).